Here is a 162-residue protein sequence, read N- to C-terminus: SsrA-binding protein (162 aa).

Positions 137-154 are enriched in basic and acidic residues; sequence HDKREDTKAREWDREKAR. The interval 137 to 162 is disordered; it reads HDKREDTKAREWDREKARIMKNKHRG.

The protein belongs to the SmpB family.

The protein localises to the cytoplasm. Its function is as follows. Required for rescue of stalled ribosomes mediated by trans-translation. Binds to transfer-messenger RNA (tmRNA), required for stable association of tmRNA with ribosomes. tmRNA and SmpB together mimic tRNA shape, replacing the anticodon stem-loop with SmpB. tmRNA is encoded by the ssrA gene; the 2 termini fold to resemble tRNA(Ala) and it encodes a 'tag peptide', a short internal open reading frame. During trans-translation Ala-aminoacylated tmRNA acts like a tRNA, entering the A-site of stalled ribosomes, displacing the stalled mRNA. The ribosome then switches to translate the ORF on the tmRNA; the nascent peptide is terminated with the 'tag peptide' encoded by the tmRNA and targeted for degradation. The ribosome is freed to recommence translation, which seems to be the essential function of trans-translation. In Aeromonas hydrophila subsp. hydrophila (strain ATCC 7966 / DSM 30187 / BCRC 13018 / CCUG 14551 / JCM 1027 / KCTC 2358 / NCIMB 9240 / NCTC 8049), this protein is SsrA-binding protein.